We begin with the raw amino-acid sequence, 79 residues long: Conotoxin ArMSGL-021 (79 aa).

Residues 1–20 form the signal peptide; that stretch reads MSRLGIMVLTLLLLVFIVTS. Positions 21-44 are excised as a propeptide; sequence HQDAGEKQATHRGAINFRWRRSLI. 3 disulfide bridges follow: cysteine 52–cysteine 64, cysteine 56–cysteine 73, and cysteine 63–cysteine 77. Leucine amide is present on leucine 78.

The protein belongs to the conotoxin O3 superfamily. As to expression, expressed by the venom duct.

It localises to the secreted. In Conus arenatus (Sand-dusted cone), this protein is Conotoxin ArMSGL-021.